The chain runs to 269 residues: Kafirin PGK1 (269 aa).

A signal peptide spans 1-21 (MATKIFALLALHALLVSGTTA).

The protein belongs to the zein family.

Functionally, major seed storage prolamin. This is Kafirin PGK1 from Sorghum bicolor (Sorghum).